The following is a 100-amino-acid chain: Small ribosomal subunit protein bS18 (100 aa).

Positions 1 to 23 (MTFIRKPAGQAKPQKYSTDAYGR) are disordered.

It belongs to the bacterial ribosomal protein bS18 family. In terms of assembly, part of the 30S ribosomal subunit. Forms a tight heterodimer with protein bS6.

Functionally, binds as a heterodimer with protein bS6 to the central domain of the 16S rRNA, where it helps stabilize the platform of the 30S subunit. This is Small ribosomal subunit protein bS18 from Endomicrobium trichonymphae.